A 229-amino-acid chain; its full sequence is Zinc finger matrin-type protein 4 (229 aa).

2 consecutive Matrin-type zinc fingers follow at residues 14 to 44 (SYCKVCSAQLISESQRVAHYESRKHASKVRL) and 72 to 106 (DKNKCCTLCNMSFTSAVVADSHYQGKIHAKRLKLL). The segment at 116–135 (TATPLSPLKPPRMDTAPVVA) is disordered. 2 Matrin-type zinc fingers span residues 145 to 175 (RYCGLCAAWFNNPLMAQQHYDGKKHKKNAAR) and 198 to 228 (YRCTICSVSLNSIEQYHAHLKGSKHQTNLKN).

It is found in the nucleus. In Homo sapiens (Human), this protein is Zinc finger matrin-type protein 4 (ZMAT4).